Reading from the N-terminus, the 379-residue chain is Trans-prenyltransferase abpB (379 aa).

Residues 90–91 (RL), R112, K197, R264, K266, Y268, and Y338 contribute to the substrate site.

The protein belongs to the tryptophan dimethylallyltransferase family.

The enzyme catalyses aspulvinone E + 2 dimethylallyl diphosphate = aspulvinone H + 2 diphosphate. It carries out the reaction butyrolactone II + dimethylallyl diphosphate = butyrolactone I + diphosphate. It participates in secondary metabolite biosynthesis. Its function is as follows. Trans-prenyltransferase that acts in both the aspulvinones and butyrolactones pathways. Prenylates aspulvinone E and butyrolactone II to yield repectively aspulvinone H and butyrolactone I. This Aspergillus terreus (strain NIH 2624 / FGSC A1156) protein is Trans-prenyltransferase abpB.